Here is a 1733-residue protein sequence, read N- to C-terminus: MGQTVTTPLSLTLQHWGDVQRIASNQSVDVKKRRWVTFCSAEWPTFNVGWPQDGTFNLGVISQVKSRVFCPGPHGHPDQVPYIVTWEALAYDPPPWVKPFVSPKPPPLPTAPVLPPGPSAQPPSRSALYPALTPSIKSKPPKPQVLPDSGGPLIDLLTEDPPPYGAQPSSSARENNEEEAATTSEVSPPSPMVSRLRGRRDPPAADSTTSQAFPLRMGGDGQLQYWPFSSSDLYNWKNNNPSFSEDPGKLTALIESVLITHQPTWDDCQQLLGTLLTGEEKQRVLLEARKAVRGNDGRPTQLPNEVNAAFPLERPDWDYTTTEGRNHLVLYRQLLLAGLQNAGRSPTNLAKVKGITQGPNESPSAFLERLKEAYRRYTPYDPEDPGQETNVSMSFIWQSAPDIGRKLERLEDLKSKTLGDLVREAEKIFNKRETPEEREERIRREIEEKEERRRAEDEQRERERDRRRHREMSKLLATVVIGQRQDRQGGERRRPQLDKDQCAYCKEKGHWAKDCPKKPRGPRGPRPQTSLLTLGDXGGQGQEPPPEPRITLKVGGQPVTFLVDTGAQHSVLTQNPGPLSDKSAWVQGATGGKRYRWTTDRKVHLATGKVTHSFLHVPDCPYPLLGRDLLTKLKAQIHFEGSGAQVVGPMGQPLQVLTLNIEDEYRLHETSKEPDVPLGSTWLSDFPQAWAETGGMGLAVRQAPLIIPLKATSTPVSIKQYPMSQEARLGIKPHIQRLLDQGILVPCQSPWNTPLLPVKKPGTNDYRPVQDLREVNKRVEDIHPTVPNPYNLLSGLPPSHQWYTVLDLKDAFFCLRLHPTSQPLFAFEWRDPEMGISGQLTWTRLPQGFKNSPTLFDEALHRDLADFRIQHPDLILLQYVDDLLLAATSEQDCQRGTRALLQTLGNLGYRASAKKAQICQKQVKYLGYLLKEGQRWLTEARKETVMGQPTPKTPRQLREFLGTAGFCRLWIPGFAEMAAPLYPLTKTGTLFNWGPDQQKAYQEIKQALLTAPALGLPDLTKPFELFVDEKQGYAKGVLTQKLGPWRRPVAYLSKKLDPVAAGWPPCLRMVAAIAVLTKDAGKLTMGQPLVILAPHAVEALVKQPPDRWLSNARMTHYQAMLLDTDRVQFGPVVALNPATLLPLPEKEAPHDCLEILAETHGTRPDLTDQPIPDADYTWYTDGSSFLQEGQRRAGAAVTTETEVIWARALPAGTSAQRAELIALTQALKMAEGKKLNVYTDSRYAFATAHVHGEIYRRRGLLTSEGREIKNKNEILALLKALFLPKRLSIIHCPGHQKGNSAEARGNRMADQAAREAAMKAVLETSTLLIEDSTPYTPPHFHYTETDLKRLRELGATYNQTKGYWVLQGKPVMPDQSVFELLDSLHRLTHLSPQKMKALLDREESPYYMLNRDRTIQYVTETCTACAQVNASKAKIGAGVRVRGHRPGTHWEVDFTEVKPGLYGYKYLLVFVDTFSGWVEAFPTKRETAKVVSKKLLEDIFPRFGMPQVLGSDNGPAFASQVSQSVADLLGIDWKLHCAYRPQSSGQVERMNRTIKETLTKLTLASGTRDWVLLLPLALYRARNTPGPHGLTPYEILYGAPPPLVNFHDPEMSKLTNSPSLQAHLQALQAVQQEVWKPLAAAYQDQLDQPVIPHPFRVGDAVWVRRHQTKNLEPRWKGPYTVLLTTPTALKVDGISAWIHAAHVKAATTPPAGTAWKVQRSQNPLKIRLTRGAP.

Gly-2 is lipidated: N-myristoyl glycine; by host. Residues Leu-108–Gln-121 show a composition bias toward pro residues. 3 disordered regions span residues Leu-108–Gly-218, Lys-449–His-469, and Trp-511–Ile-550. The short motif at Pro-109–Pro-112 is the PTAP/PSAP motif element. Residues Leu-128–Leu-132 carry the LYPX(n)L motif motif. Residues Pro-161–Tyr-164 carry the PPXY motif motif. At Ser-190 the chain carries Phosphoserine; by host. Positions Glu-436 to Leu-476 form a coiled coil. The segment covering Lys-449–Arg-464 has biased composition (basic and acidic residues). The CCHC-type zinc-finger motif lies at Asp-500–Lys-517. Over residues Arg-526 to Gly-535 the composition is skewed to low complexity. The Peptidase A2 domain maps to Val-559 to Leu-629. The active-site Protease; shared with dimeric partner is the Asp-564. Residues Tyr-721, Asp-771, Arg-773, and Pro-787 each contribute to the RNA site. The region spanning Leu-739–Leu-930 is the Reverse transcriptase domain. Asp-807 serves as a coordination point for Mg(2+). RNA-binding residues include Asn-851 and Pro-853. 2 residues coordinate Mg(2+): Asp-881 and Asp-882. DNA contacts are provided by Arg-941, Arg-955, Arg-958, and Phe-966. RNA contacts are provided by Lys-1054 and Lys-1055. Position 1063 (Trp-1063) interacts with DNA. Residue Lys-1082 coordinates RNA. DNA is bound at residue Arg-1113. Residues Pro-1172–Met-1318 form the RNase H type-1 domain. Asp-1181 serves as a coordination point for Mg(2+). RNA contacts are provided by Ser-1184 and Leu-1186. DNA is bound by residues Gln-1187, Ser-1214, and Gln-1216. Residues Glu-1219 and Asp-1240 each contribute to the Mg(2+) site. Residues Arg-1242 and Arg-1266 each contribute to the RNA site. Mg(2+) contacts are provided by Asp-1310, Asp-1453, and Asp-1512. Residues Arg-1442–Pro-1600 form the Integrase catalytic domain.

As to quaternary structure, homohexamer. Further associates as homomultimer. The virus core is composed of a lattice formed from hexagonal rings, each containing six capsid monomers. Homodimer. The protease is a homodimer, whose active site consists of two apposed aspartic acid residues. The reverse transcriptase is a monomer. It depends on Mg(2+) as a cofactor. The cofactor is Mn(2+). Post-translationally, specific enzymatic cleavages by the viral protease yield mature proteins. The protease is released by autocatalytic cleavage. The polyprotein is cleaved during and after budding, this process is termed maturation. Sumoylated. Required for virus replication. In terms of processing, phosphorylated on serine residues.

The protein resides in the host cell membrane. It is found in the virion. It catalyses the reaction DNA(n) + a 2'-deoxyribonucleoside 5'-triphosphate = DNA(n+1) + diphosphate. It carries out the reaction Endonucleolytic cleavage to 5'-phosphomonoester.. Functionally, plays a role in budding and is processed by the viral protease during virion maturation outside the cell. During budding, it recruits, in a PPXY-dependent or independent manner, Nedd4-like ubiquitin ligases that conjugate ubiquitin molecules to Gag, or to Gag binding host factors. Interaction with HECT ubiquitin ligases probably link the viral protein to the host ESCRT pathway and facilitate release. Its function is as follows. Targets Gag and gag-pol polyproteins to the plasma membrane via a multipartite membrane binding signal, that includes its myristoylated N-terminus. Also mediates nuclear localization of the pre-integration complex. In terms of biological role, forms the spherical core of the virion that encapsulates the genomic RNA-nucleocapsid complex. Involved in the packaging and encapsidation of two copies of the genome. Binds with high affinity to conserved UCUG elements within the packaging signal, located near the 5'-end of the genome. This binding is dependent on genome dimerization. Functionally, the aspartyl protease mediates proteolytic cleavages of Gag and Gag-Pol polyproteins during or shortly after the release of the virion from the plasma membrane. Cleavages take place as an ordered, step-wise cascade to yield mature proteins. This process is called maturation. Displays maximal activity during the budding process just prior to particle release from the cell. Its function is as follows. Multifunctional enzyme that converts the viral dimeric RNA genome into dsDNA in the cytoplasm, shortly after virus entry into the cell. This enzyme displays a DNA polymerase activity that can copy either DNA or RNA templates, and a ribonuclease H (RNase H) activity that cleaves the RNA strand of RNA-DNA heteroduplexes in a partially processive 3' to 5' endonucleasic mode. Conversion of viral genomic RNA into dsDNA requires many steps. A tRNA binds to the primer-binding site (PBS) situated at the 5' end of the viral RNA. RT uses the 3' end of the tRNA primer to perform a short round of RNA-dependent minus-strand DNA synthesis. The reading proceeds through the U5 region and ends after the repeated (R) region which is present at both ends of viral RNA. The portion of the RNA-DNA heteroduplex is digested by the RNase H, resulting in a ssDNA product attached to the tRNA primer. This ssDNA/tRNA hybridizes with the identical R region situated at the 3' end of viral RNA. This template exchange, known as minus-strand DNA strong stop transfer, can be either intra- or intermolecular. RT uses the 3' end of this newly synthesized short ssDNA to perform the RNA-dependent minus-strand DNA synthesis of the whole template. RNase H digests the RNA template except for a polypurine tract (PPT) situated at the 5' end of the genome. It is not clear if both polymerase and RNase H activities are simultaneous. RNase H probably can proceed both in a polymerase-dependent (RNA cut into small fragments by the same RT performing DNA synthesis) and a polymerase-independent mode (cleavage of remaining RNA fragments by free RTs). Secondly, RT performs DNA-directed plus-strand DNA synthesis using the PPT that has not been removed by RNase H as primers. PPT and tRNA primers are then removed by RNase H. The 3' and 5' ssDNA PBS regions hybridize to form a circular dsDNA intermediate. Strand displacement synthesis by RT to the PBS and PPT ends produces a blunt ended, linear dsDNA copy of the viral genome that includes long terminal repeats (LTRs) at both ends. In terms of biological role, catalyzes viral DNA integration into the host chromosome, by performing a series of DNA cutting and joining reactions. This enzyme activity takes place after virion entry into a cell and reverse transcription of the RNA genome in dsDNA. The first step in the integration process is 3' processing. This step requires a complex comprising the viral genome, matrix protein and integrase. This complex is called the pre-integration complex (PIC). The integrase protein removes 2 nucleotides from each 3' end of the viral DNA, leaving recessed CA OH's at the 3' ends. In the second step that requires cell division, the PIC enters cell nucleus. In the third step, termed strand transfer, the integrase protein joins the previously processed 3' ends to the 5' ends of strands of target cellular DNA at the site of integration. The last step is viral DNA integration into host chromosome. The chain is Gag-Pol polyprotein (gag-pol) from Homo sapiens (Human).